The chain runs to 289 residues: MQSPRRNAEGRPLGTCDPSSSGSPAHGGGSRFEFQSLLSSRMPGADPTSARLRASESPVHRRGSFPLAGAGSSQALPPQLPEEDRIDLNPSFLGIALRSLLAIDLWLSKKLGVCAGESSSWGSMRPLMKLLEISGHGIPWLLGTLYCLSRSDSWAGREVLMNLLFALLLDLLLVSLIKGLVRRRRPAHNQMDMFFTISVDKYSFPSGHTTRAALVSRFILNHLVLAIPLRVLVVLWAFILGLSRVMLGRHNVTDVAFGFFLGYMQYSIVDYCWLSPRTAPVLFVLWNQP.

Positions 1 to 81 (MQSPRRNAEG…SSQALPPQLP (81 aa)) are disordered. Topologically, residues 1–126 (MQSPRRNAEG…ESSSWGSMRP (126 aa)) are cytoplasmic. 3 positions are modified to phosphoserine: S23, S30, and S64. Residues 127–147 (LMKLLEISGHGIPWLLGTLYC) form a helical membrane-spanning segment. The Lumenal portion of the chain corresponds to 148–158 (LSRSDSWAGRE). The chain crosses the membrane as a helical span at residues 159–179 (VLMNLLFALLLDLLLVSLIKG). Positions 178–186 (KGLVRRRRP) are phosphatase sequence motif I. Residues 180-222 (LVRRRRPAHNQMDMFFTISVDKYSFPSGHTTRAALVSRFILNH) are Cytoplasmic-facing. Residues 205-208 (PSGH) form a phosphatase sequence motif II region. Catalysis depends on H208, which acts as the Proton donors. Residues 223 to 243 (LVLAIPLRVLVVLWAFILGLS) traverse the membrane as a helical segment. The tract at residues 243–254 (SRVMLGRHNVTD) is phosphatase sequence motif III. Over 244 to 254 (RVMLGRHNVTD) the chain is Lumenal. H250 acts as the Nucleophile in catalysis. Residues 255–275 (VAFGFFLGYMQYSIVDYCWLS) form a helical membrane-spanning segment. Residues 276-289 (PRTAPVLFVLWNQP) are Cytoplasmic-facing.

Belongs to the PA-phosphatase related phosphoesterase family. Post-translationally, phosphorylation by PKC activates the phosphatase activity towards presqualene diphosphate.

The protein localises to the endoplasmic reticulum membrane. Its subcellular location is the nucleus envelope. The protein resides in the nucleus inner membrane. It catalyses the reaction presqualene diphosphate + H2O = presqualene phosphate + phosphate + H(+). It carries out the reaction presqualene phosphate + H2O = presqualene alcohol + phosphate. The enzyme catalyses (2E,6E)-farnesyl diphosphate + H2O = (2E,6E)-farnesyl phosphate + phosphate + H(+). The catalysed reaction is (2E,6E)-farnesyl phosphate + H2O = (2E,6E)-farnesol + phosphate. It catalyses the reaction (2E,6E,10E)-geranylgeranyl diphosphate + H2O = (2E,6E,10E)-geranylgeranyl phosphate + phosphate + H(+). It carries out the reaction (2E,6E,10E)-geranylgeranyl phosphate + H2O = (2E,6E,10E)-geranylgeraniol + phosphate. The enzyme catalyses (2E)-geranyl diphosphate + H2O = (2E)-geranyl phosphate + phosphate + H(+). The catalysed reaction is (2E)-geranyl phosphate + H2O = (2E)-geraniol + phosphate. It catalyses the reaction 1,2-dihexadecanoyl-sn-glycero-3-phosphate + H2O = 1,2-dihexadecanoyl-sn-glycerol + phosphate. Its function is as follows. Magnesium-independent polyisoprenoid diphosphatase that catalyzes the sequential dephosphorylation of presqualene, farnesyl, geranyl and geranylgeranyl diphosphates. Functions in the innate immune response through the dephosphorylation of presqualene diphosphate which acts as a potent inhibitor of the signaling pathways contributing to polymorphonuclear neutrophils activation. May regulate the biosynthesis of cholesterol and related sterols by dephosphorylating presqualene and farnesyl diphosphate, two key intermediates in this biosynthetic pathway. May also play a role in protein prenylation by acting on farnesyl diphosphate and its derivative geranylgeranyl diphosphate, two precursors for the addition of isoprenoid anchors to membrane proteins. Has a lower activity towards phosphatidic acid (PA), but through phosphatidic acid dephosphorylation may participate in the biosynthesis of phospholipids and triacylglycerols. May also act on ceramide-1-P, lysophosphatidic acid (LPA) and sphing-4-enine 1-phosphate/sphingosine-1-phosphate. The polypeptide is Polyisoprenoid diphosphate/phosphate phosphohydrolase PLPP6 (Bos taurus (Bovine)).